The primary structure comprises 801 residues: Heavy metal tolerance factor 1 (801 aa).

At 1–24 (MGFSPFLDECRAEGLWPIGPSCNK) the chain is on the lumenal side. The chain crosses the membrane as a helical span at residues 25–45 (IISFGVYTFFIVVNFIVLCIP). The Cytoplasmic segment spans residues 46–75 (NSNSANNNYRRMTDDDASSTSKLTISKILS). Residues 76–96 (ICTIFAVICQSIFYFCFTFYF) traverse the membrane as a helical segment. The Lumenal segment spans residues 97–101 (HPYTH). A helical transmembrane segment spans residues 102 to 122 (LLLAFCVSKLFFWILSLCSFS). Over 123-129 (KWRNQPS) the chain is Cytoplasmic. The helical transmembrane segment at 130 to 150 (TPISLAFAFSAALLIHCIPLT) threads the bilayer. The Lumenal portion of the chain corresponds to 151 to 167 (DWKKYFEPTSKNRGDLT). Residues 168–188 (FYIIELALVTVVFFFTIVTGL) form a helical membrane-spanning segment. Residues 189–226 (FNFSGCSSRESAWNNLSKKVVTVAPYIWPTKSISLQLR) are Cytoplasmic-facing. The helical transmembrane segment at 227-247 (VVFCLFLLIIGRLINVSLPIL) threads the bilayer. Residues 227–516 (VVFCLFLLII…FGTIYRVIQK (290 aa)) form the ABC transmembrane type-1 domain. Topologically, residues 248-264 (SKWIVDELATPDTFQYS) are lumenal. Residues 265-285 (LLFLATFLKFLQGNGAMGGFL) traverse the membrane as a helical segment. The Cytoplasmic portion of the chain corresponds to 286-341 (NTVRTYLWIPIQQYTTRELEVELFKHLHSLSLRWHLSRKTGQVLRVMDRGTSSVNN). Residues 342 to 364 (ILNYILFNVVPTIADIVIAVIFF) form a helical membrane-spanning segment. The Lumenal segment spans residues 365–371 (FSAFNAY). A helical transmembrane segment spans residues 372 to 390 (FGLIVFGTMALYLTVTISI). Residues 391 to 461 (TEWRTQYIRE…SLAFLNCLQN (71 aa)) are Cytoplasmic-facing. A helical transmembrane segment spans residues 462 to 482 (AIIGIGMIGGSVFVVYMIVHE). Residues 483 to 489 (KTLTVGD) lie on the Lumenal side of the membrane. Residues 490–510 (YVLFTTYLLQLYTPLNFFGTI) traverse the membrane as a helical segment. The Cytoplasmic segment spans residues 511-801 (YRVIQKAFVD…KSIELGEELP (291 aa)). The ABC transporter domain maps to 550–784 (ISVKNLTFEY…QGTYASMWEA (235 aa)). 583–590 (GSSGSGKS) is a binding site for ATP.

This sequence belongs to the ABC transporter superfamily. ABCB family. Heavy Metal importer (TC 3.A.1.210) subfamily. Expressed in coelomocytes, as well as in head and tail neurons, and in the intestinal cells.

Its subcellular location is the vacuole membrane. It localises to the early endosome. It is found in the late endosome. The protein localises to the recycling endosome. Its function is as follows. May play a pivotal role in the detoxification of heavy metals such as cadmium but do not depend exclusively on phytochelatins (PC) synthesis. In Caenorhabditis elegans, this protein is Heavy metal tolerance factor 1.